The sequence spans 338 residues: Anthocyanidin reductase ((2S)-flavan-3-ol-forming) (338 aa).

Residues 18-21, Lys48, 87-90, and Tyr168 contribute to the NADP(+) site; these read TGFV and VATP.

The protein belongs to the NAD(P)-dependent epimerase/dehydratase family. Dihydroflavonol-4-reductase subfamily. As to expression, expressed in leaves and grape berries.

It catalyses the reaction a (2S,3R)-flavan-3-ol + 2 NADP(+) = an anthocyanidin with a 3-hydroxy group + 2 NADPH + 2 H(+). The catalysed reaction is a (2S,3S)-flavan-3-ol + 2 NADP(+) = an anthocyanidin with a 3-hydroxy group + 2 NADPH + 2 H(+). The protein operates within secondary metabolite biosynthesis; flavonoid biosynthesis. In terms of biological role, produces the terminal flavan-3-ol monomers required for the formation of proanthocyanidins or condensed tannins in leaves and flowers, as well as in the skin and seeds of developing berries. Behaves as a reductase and as a C-3 epimerase. Catalyzes the double reduction of anthocyanidins, producing a mixture of (2S,3S)- and (2S,3R)-flavan-3-ols. The enzyme catalyzes sequential hydride transfers to C-2 and C-4, respectively and epimerization at C-3 is achieved by tautomerization that occurs between the two hydride transfers. Converts cyanidin, pelargonidin and delphinidin into catechin and epicatechin, afzelechin and epiafzelechin, and gallocatechin and epigallocatechin respectively. In Vitis vinifera (Grape), this protein is Anthocyanidin reductase ((2S)-flavan-3-ol-forming).